The primary structure comprises 332 residues: 30 kDa heat shock protein (332 aa).

The Extracellular segment spans residues methionine 1 to tryptophan 34. A helical membrane pass occupies residues leucine 35–isoleucine 55. The Cytoplasmic segment spans residues alanine 56–arginine 65. A helical membrane pass occupies residues tyrosine 66–alanine 86. Over serine 87–lysine 121 the chain is Extracellular. A helical transmembrane segment spans residues tyrosine 122–threonine 142. Residues threonine 143–serine 157 lie on the Cytoplasmic side of the membrane. Residues leucine 158 to isoleucine 178 traverse the membrane as a helical segment. Residues lysine 179–threonine 181 are Extracellular-facing. Residues tyrosine 182 to cysteine 202 traverse the membrane as a helical segment. Topologically, residues glutamine 203 to asparagine 215 are cytoplasmic. The helical transmembrane segment at alanine 216 to serine 236 threads the bilayer. Topologically, residues aspartate 237–alanine 248 are extracellular. The chain crosses the membrane as a helical span at residues isoleucine 249 to alanine 269. Over valine 270–alanine 332 the chain is Cytoplasmic. The segment at alanine 290–alanine 332 is disordered. Serine 308 is subject to Phosphoserine. Over residues proline 322 to alanine 332 the composition is skewed to acidic residues. Threonine 331 carries the phosphothreonine modification.

This sequence belongs to the archaeal/bacterial/fungal opsin family.

It localises to the membrane. In terms of biological role, probably cooperates with other heat shock proteins in the translocation of polypeptides through membranes. It may counteract the altering effect of heat shock on the plasma membrane. The polypeptide is 30 kDa heat shock protein (HSP30) (Saccharomyces cerevisiae (strain ATCC 204508 / S288c) (Baker's yeast)).